Reading from the N-terminus, the 3159-residue chain is E1A-binding protein p400 (3159 aa).

A compositionally biased stretch (polar residues) spans 1–16; that stretch reads MHHGTGPQNVQHQLQR. 7 disordered regions span residues 1–65, 125–154, 212–261, 282–359, 545–594, 633–658, and 684–770; these read MHHG…MNRS, SPLSQQVQTQSPTQPSPGPGQALQNVRAGA, PGTP…HITT, VLQG…PASP, LMPT…PQLP, QQPNVPIPAPPSSQLPIPPSQPAQLA, and TRLP…SQDT. A compositionally biased stretch (pro residues) spans 31 to 41; the sequence is HPNPPPSPAAP. Low complexity predominate over residues 42 to 55; the sequence is FAPSASPSAPQSPS. Ser-53 is subject to Phosphoserine. The span at 56-65 shows a compositional bias: polar residues; the sequence is YQIQQLMNRS. Composition is skewed to low complexity over residues 125-137 and 237-256; these read SPLSQQVQTQSPT and LGPQSPAAAGGAGLQPLASP. Ser-135 is modified (phosphoserine). 2 positions are modified to phosphoserine: Ser-315 and Ser-321. A compositionally biased stretch (low complexity) spans 558-571; sequence QAAQLAGQRQSQQQ. Residues 572 to 585 show a composition bias toward polar residues; it reads YDPSTGPPVQNAAS. Composition is skewed to pro residues over residues 637–653 and 689–698; these read VPIPAPPSSQLPIPPSQ and DPAPPCPRPL. Residues 699 to 711 show a composition bias toward low complexity; the sequence is PTSSTSSLAPVSG. Composition is skewed to polar residues over residues 725–742 and 751–760; these read NRPSSATNKALSPVTSRT and TKPQSPAQNA. Phosphoserine occurs at positions 736 and 755. The span at 761–770 shows a compositional bias: low complexity; that stretch reads TSSQDSSQDT. The HSA domain maps to 799-871; the sequence is LPKLQEAPRP…EQSRLRRIAA (73 aa). Disordered regions lie at residues 915-967 and 997-1024; these read ELRP…GVVD and SSQWPRPKPDGEDTSGEEDADDCPGDRE. Phosphoserine occurs at positions 928 and 941. Position 945 is a phosphothreonine (Thr-945). Composition is skewed to acidic residues over residues 945-962 and 1008-1019; these read TDDEVDDEEETIEEEEAN and EDTSGEEDADDC. An interactions with RUVBL1 and RUVBL2 region spans residues 951–1365; that stretch reads DEEETIEEEE…NVLSILVRLQ (415 aa). A Phosphoserine modification is found at Ser-1011. Residues 1103–1268 form the Helicase ATP-binding domain; it reads AKLYRKNLNG…WTMVHFLVPG (166 aa). 1116 to 1123 provides a ligand contact to ATP; sequence DEAGLGKT. Residues 1219 to 1222 carry the DEAH box-like motif; it reads DEMQ. Residues 1467 to 1582 are disordered; sequence VQYGQKPEGR…QAPSHAAGQS (116 aa). At Lys-1472 the chain carries N6-acetyllysine. Low complexity-rich tracts occupy residues 1481–1498 and 1538–1565; these read PSTHPPRTAAPTTASAAP and PASASSTAASPAHPAKLRAQTTAQASTP. 3 positions are modified to phosphoserine: Ser-1547, Ser-1728, and Ser-1732. The disordered stretch occupies residues 1787–1807; sequence GSLDGRRGKEAGPAHSYTSSS. The span at 1789-1798 shows a compositional bias: basic and acidic residues; sequence LDGRRGKEAG. Residues 1899 to 2056 enclose the Helicase C-terminal domain; that stretch reads KLEALAILLQ…GNDYSMAFLT (158 aa). Disordered regions lie at residues 2119-2144 and 2287-2311; these read KSAQEGVLGPHTDALSSDSENMPCDE and KERKRHKTDPSAAGRKKKQRHGEAV. An N6-acetyllysine mark is found at Lys-2349 and Lys-2356. Residues 2360-2429 enclose the Myb-like domain; the sequence is EPGQDNPEWL…QCRNRYENVI (70 aa). Disordered stretches follow at residues 2524–2602 and 2665–2688; these read KEKK…AQPA and TPGGSAPAQVVHTQPPPRAVGSPA. Residues 2524–2789 form an interaction with ZNF42 region; sequence KEKKALADQQ…QQQQQTTTTS (266 aa). The span at 2530–2540 shows a compositional bias: low complexity; it reads ADQQKAQQPAV. Composition is skewed to pro residues over residues 2541–2563 and 2572–2589; these read AQPPPPQPQPPPPPQQPPPPLPQ and PAGPPAVQPQPQPQPQTQ. Residues 2590–2602 show a composition bias toward low complexity; it reads PQPVQAPAKAQPA. The residue at position 2686 (Ser-2686) is a Phosphoserine. Position 2813 is a phosphothreonine (Thr-2813). 2 disordered regions span residues 2821–2869 and 3115–3159; these read QKQK…TAPR and APLQ…PPCQ. A compositionally biased stretch (pro residues) spans 2828–2843; that stretch reads PPQPPPPQAQSAPPQP. Over residues 2844–2866 the composition is skewed to low complexity; that stretch reads TAQVQVQTSQPPQQQSPQLTTVT. The span at 3129 to 3140 shows a compositional bias: polar residues; that stretch reads PASSDSPSQQPK.

It belongs to the SNF2/RAD54 helicase family. SWR1 subfamily. Component of the NuA4 histone acetyltransferase complex which contains the catalytic subunit KAT5/TIP60 and the subunits EP400, TRRAP/PAF400, BRD8/SMAP, EPC1, DMAP1/DNMAP1, RUVBL1/TIP49, RUVBL2, ING3, actin, ACTL6A/BAF53A, MORF4L1/MRG15, MORF4L2/MRGX, MRGBP, YEATS4/GAS41, VPS72/YL1 and MEAF6. May also participate in the formation of NuA4 related complexes which lack the KAT5/TIP60 catalytic subunit, but which include the SWI/SNF related protein SRCAP. The NuA4 complex interacts with MYC and the adenovirus E1A protein. EP400 interacts with TRRAP, RUVBL1 and RUVBL2. Component of a SWR1-like complex. Interacts with ZNF42. Interacts with PHF5A. Interacts with human cytomegalovirus UL27. Interacts with human adenovirus 5 E1A protein; this interaction stabilizes MYC. In terms of tissue distribution, ubiquitously expressed.

The protein localises to the nucleus. Component of the NuA4 histone acetyltransferase complex which is involved in transcriptional activation of select genes principally by acetylation of nucleosomal histones H4 and H2A. This modification may both alter nucleosome - DNA interactions and promote interaction of the modified histones with other proteins which positively regulate transcription. May be required for transcriptional activation of E2F1 and MYC target genes during cellular proliferation. The NuA4 complex ATPase and helicase activities seem to be, at least in part, contributed by the association of RUVBL1 and RUVBL2 with EP400. May regulate ZNF42 transcription activity. Component of a SWR1-like complex that specifically mediates the removal of histone H2A.Z/H2AZ1 from the nucleosome. In Homo sapiens (Human), this protein is E1A-binding protein p400 (EP400).